We begin with the raw amino-acid sequence, 251 residues long: Homeobox protein notochord (251 aa).

Residues 1–14 (MPSPRPRGSPPPAP) are compositionally biased toward pro residues. A disordered region spans residues 1 to 47 (MPSPRPRGSPPPAPSGSRVRPPRSGRSPAPRSPTGPNTPRAPGRFES). The segment covering 15 to 35 (SGSRVRPPRSGRSPAPRSPTG) has biased composition (low complexity). Residues 156-215 (QKRVRTMFNLEQLEELEKVFAKQHNLVGKKRAQLAARLKLTENQVRVWFQNRRVKYQKQQ) constitute a DNA-binding region (homeobox). Low complexity predominate over residues 224–242 (AEAASLDEPSSSSIASIQS). Residues 224–251 (AEAASLDEPSSSSIASIQSDDAESGVDG) are disordered.

The protein resides in the nucleus. Functionally, transcription regulator acting downstream of both FOXA2 and Brachyury (T) during notochord development. Required for node morphogenesis. Is essential for cilia formation in the posterior notochord (PNC) and for left-right patterning; acts upstream of FOXJ1 and RFX3 in this process and is required for the expression of various components important for axonemal assembly and function. Plays a role in regulating axial versus paraxial cell fate. Activates the transcription of ciliary proteins C11orf97 homolog, FAM183B and SPACA9 in the embryonic ventral node. The chain is Homeobox protein notochord (NOTO) from Homo sapiens (Human).